Reading from the N-terminus, the 447-residue chain is Glutamate-1-semialdehyde 2,1-aminomutase (447 aa).

Lys-272 carries the post-translational modification N6-(pyridoxal phosphate)lysine.

The protein belongs to the class-III pyridoxal-phosphate-dependent aminotransferase family. HemL subfamily. In terms of assembly, homodimer. It depends on pyridoxal 5'-phosphate as a cofactor.

It localises to the cytoplasm. It catalyses the reaction (S)-4-amino-5-oxopentanoate = 5-aminolevulinate. The protein operates within porphyrin-containing compound metabolism; protoporphyrin-IX biosynthesis; 5-aminolevulinate from L-glutamyl-tRNA(Glu): step 2/2. This is Glutamate-1-semialdehyde 2,1-aminomutase from Leifsonia xyli subsp. xyli (strain CTCB07).